The primary structure comprises 429 residues: Keratin, type I cytoskeletal 18 (429 aa).

The segment at 2–78 (SYSRSVYSSS…NVNLIGGGQN (77 aa)) is head. Positions 79–114 (EKETMQDLNDRLASYLERVRSLEAANKKLEVQIRQH) are coil 1A. Residues 79–389 (EKETMQDLND…RLLEGDGSFD (311 aa)) form the IF rod domain. A linker 1 region spans residues 115–130 (TEKKGPSKDWSPYYKT). Residues 131–222 (IEDLRKQVFD…KNHQDDVTEL (92 aa)) form a coil 1B region. Positions 223–246 (QAQVARSAVTVEVDAPKSQDLGKI) are linker 12. The tract at residues 247-385 (MTELRAQYDG…HTYRRLLEGD (139 aa)) is coil 2. The tract at residues 386-429 (GSFDLQDAVPTVTTQTVKKVITTTQRIVDGKVVSESNDTEVLKS) is tail.

It belongs to the intermediate filament family. Heterotetramer of two type I and two type II keratins. Keratin-18 associates with keratin-8. In terms of processing, phosphorylated. Post-translationally, proteolytically cleaved by caspases during epithelial cell apoptosis.

When phosphorylated, plays a role in filament reorganization. The chain is Keratin, type I cytoskeletal 18 from Xenopus tropicalis (Western clawed frog).